A 332-amino-acid chain; its full sequence is 2,3-diketo-L-gulonate reductase (332 aa).

His-44 functions as the Proton donor in the catalytic mechanism. NAD(+)-binding positions include Ile-168–Ser-174, Trp-224–Lys-225, and Gly-304–Glu-306.

The protein belongs to the LDH2/MDH2 oxidoreductase family. DlgD subfamily. Homodimer.

It is found in the cytoplasm. It carries out the reaction 3-dehydro-L-gulonate + NAD(+) = 2,3-dioxo-L-gulonate + NADH + H(+). The catalysed reaction is 3-dehydro-L-gulonate + NADP(+) = 2,3-dioxo-L-gulonate + NADPH + H(+). Functionally, catalyzes the reduction of 2,3-diketo-L-gulonate in the presence of NADH, to form 3-keto-L-gulonate. This chain is 2,3-diketo-L-gulonate reductase, found in Salmonella newport (strain SL254).